A 78-amino-acid polypeptide reads, in one-letter code: U-scoloptoxin(04)-Er1d (78 aa).

An N-terminal signal peptide occupies residues 1 to 24; that stretch reads MTRHLIFAAMLLVCLFVCWNAVGA. A propeptide spanning residues 25–28 is cleaved from the precursor; that stretch reads RDAR.

It belongs to the scoloptoxin-04 family. In terms of processing, contains 2 disulfide bonds. Expressed by the venom gland.

It localises to the secreted. The sequence is that of U-scoloptoxin(04)-Er1d from Ethmostigmus rubripes (Giant centipede).